Consider the following 321-residue polypeptide: tRNA U34 carboxymethyltransferase (321 aa).

Carboxy-S-adenosyl-L-methionine is bound by residues K90, W104, K109, G129, 151–153 (DPT), 180–181 (IE), M195, Y199, and R314.

It belongs to the class I-like SAM-binding methyltransferase superfamily. CmoB family. In terms of assembly, homotetramer.

The catalysed reaction is carboxy-S-adenosyl-L-methionine + 5-hydroxyuridine(34) in tRNA = 5-carboxymethoxyuridine(34) in tRNA + S-adenosyl-L-homocysteine + H(+). In terms of biological role, catalyzes carboxymethyl transfer from carboxy-S-adenosyl-L-methionine (Cx-SAM) to 5-hydroxyuridine (ho5U) to form 5-carboxymethoxyuridine (cmo5U) at position 34 in tRNAs. The protein is tRNA U34 carboxymethyltransferase of Mannheimia succiniciproducens (strain KCTC 0769BP / MBEL55E).